The primary structure comprises 177 residues: Large ribosomal subunit protein uL6 (177 aa).

It belongs to the universal ribosomal protein uL6 family. Part of the 50S ribosomal subunit.

In terms of biological role, this protein binds to the 23S rRNA, and is important in its secondary structure. It is located near the subunit interface in the base of the L7/L12 stalk, and near the tRNA binding site of the peptidyltransferase center. The sequence is that of Large ribosomal subunit protein uL6 from Aeromonas salmonicida (strain A449).